Here is a 393-residue protein sequence, read N- to C-terminus: S-adenosylmethionine synthase 2 (393 aa).

Residue Glu9 coordinates Mg(2+). ATP is bound at residue His15. Glu43 contacts K(+). Glu56 and Gln99 together coordinate L-methionine. ATP contacts are provided by residues Asp167–Lys169, Ser235–Phe238, Asp246, Arg252–Lys253, Ala269, Lys273, and Lys277. L-methionine is bound at residue Asp246. Lys277 serves as a coordination point for L-methionine.

Belongs to the AdoMet synthase family. In terms of assembly, homotetramer. Requires Mn(2+) as cofactor. Mg(2+) serves as cofactor. It depends on Co(2+) as a cofactor. K(+) is required as a cofactor.

It is found in the cytoplasm. It catalyses the reaction L-methionine + ATP + H2O = S-adenosyl-L-methionine + phosphate + diphosphate. The protein operates within amino-acid biosynthesis; S-adenosyl-L-methionine biosynthesis; S-adenosyl-L-methionine from L-methionine: step 1/1. Its function is as follows. Catalyzes the formation of S-adenosylmethionine from methionine and ATP. The reaction comprises two steps that are both catalyzed by the same enzyme: formation of S-adenosylmethionine (AdoMet) and triphosphate, and subsequent hydrolysis of the triphosphate. The chain is S-adenosylmethionine synthase 2 (METK2) from Populus trichocarpa (Western balsam poplar).